The following is a 360-amino-acid chain: Peptide chain release factor 1 (360 aa).

At Gln236 the chain carries N5-methylglutamine.

It belongs to the prokaryotic/mitochondrial release factor family. In terms of processing, methylated by PrmC. Methylation increases the termination efficiency of RF1.

The protein resides in the cytoplasm. Its function is as follows. Peptide chain release factor 1 directs the termination of translation in response to the peptide chain termination codons UAG and UAA. The polypeptide is Peptide chain release factor 1 (Ligilactobacillus salivarius (strain UCC118) (Lactobacillus salivarius)).